Here is a 469-residue protein sequence, read N- to C-terminus: MLSTEMPLPTTGSTLLKTPASPSPNQNLLPLTAVINKNGELEIGGCSVPALVEQFGSPLYILDETTLRQAAQQYRQSFQAHYPGSSQVIYASKAWSCLAVVAIAAQEGLGFDVVSGGELFTTVSALKQLGWDEAEIAEKIYFHGNNKSVQELQEAIAINCTIIVDNWLELETLTKLAADSGAPVKIMLRLTPGIECHTHEYIKTGHLDSKFGFDPNQLEAVFTYIAQQPSLHCLGLHAHIGSQIFERQPHKDLGEVLVQWFTKGLTYGLPLTELNIGGGLGICYTESDDPPSIEEWAQVAAISVAKACDRQNIPYPKLIAEPGRSLVGSACVTAYRVGGRKVVPNIRTYISVDGGMSDNPRPITYQSVYRVALANRMNDEITETVTVAGKHCESGDILVKDVALPAAEPGDIMVVAATGAYNHSMASNYNRLGRPAAVLVNQGQANLILQRETYTDLLRQDCLPNRLLS.

The disordered stretch occupies residues M1 to S23. K93 carries the N6-(pyridoxal phosphate)lysine modification. Pyridoxal 5'-phosphate contacts are provided by residues G279 and E321 to R324. Residues R324, R361, and Y365 each coordinate substrate. C392 acts as the Proton donor in catalysis. Residues E393 and Y421 each coordinate substrate. A pyridoxal 5'-phosphate-binding site is contributed by Y421.

It belongs to the Orn/Lys/Arg decarboxylase class-II family. LysA subfamily. In terms of assembly, homodimer. Pyridoxal 5'-phosphate is required as a cofactor.

It catalyses the reaction meso-2,6-diaminopimelate + H(+) = L-lysine + CO2. Its pathway is amino-acid biosynthesis; L-lysine biosynthesis via DAP pathway; L-lysine from DL-2,6-diaminopimelate: step 1/1. Its function is as follows. Specifically catalyzes the decarboxylation of meso-diaminopimelate (meso-DAP) to L-lysine. The polypeptide is Diaminopimelate decarboxylase (Synechocystis sp. (strain ATCC 27184 / PCC 6803 / Kazusa)).